Here is a 195-residue protein sequence, read N- to C-terminus: Large ribosomal subunit protein bL17 (195 aa).

A disordered region spans residues 125–195 (ANRARRVGAS…PTQDSDADKS (71 aa)). Low complexity predominate over residues 136–152 (QTAPVAAAAAPQAAVEP). 2 stretches are compositionally biased toward acidic residues: residues 153–173 (EATEGPDADDSSALPEAEDTT) and 183–195 (TDDPTQDSDADKS).

The protein belongs to the bacterial ribosomal protein bL17 family. As to quaternary structure, part of the 50S ribosomal subunit. Contacts protein L32.

This is Large ribosomal subunit protein bL17 from Mycobacterium sp. (strain JLS).